The chain runs to 785 residues: MGSEPRFEPRPELIDLPVLQKFKLYATPSNFYLIGRDENKSFRRILKIDRRDQNELNLFEDPTRYTKDEMRELKRRMIVGNEESGGFKAITTCYGIIGFVRFLEPYYMLLITKRKKVGEICGHTVYGIAESQMIAIPHPSIQSKVAKSEAELRYKKLLSVVDLSKNFYFSYTYHLMYSLQKNIGNTERGNPHDNTMFVWNSFLTREIRKILQNSIWTVALIYGFFQQTKCSVSGEKFVFTIIARRSRHYAGTRYLRRGVNDIGRVANDVETEQIVSKVVPAGQKIPITSVVQVRGSIPLFWSQEASVFNPQPEIILNKKDANYEATQHHFQNLRQRYGNRIIILNLLKTVTGEKKHRETILRGEFAKTIRFINKGMDREHRLKAIHFDLSKHYKKGADGAFNHLCIFSRKSLELTDLFYCKAPSGVGAEEVIYDSFFNNPIPSQDEEASSPEKEDMKADIFLLQNGVLRTNCIDCLDRTNFAQYAHGLVSLGHQLRTLGISGPPVVDLNNPLAIELMDAYQKMGNTLAMQYGGSEAHSKMFCDLRGNWNMVMRQRDIFTAVRRYYSNAYQDSDKQNAINVFLGHFRPRLGRPALWELDSDQHNIGRSGSNLDIENMRPLIRRSFSDNIIMDCDLNLEELVRENSQPTYEGLNGGVSGTNLEFPFYETEPASLSFLSVMRNEELMRETGSGQMFQGSSSNSDSHRPNDIPGFSHSYVTKFTPAEDIFERGSSKSVSSDNLFTDRDESVTSLTNTNSSFEFPIMGGSDLLPGFSNAFARWVFSARAW.

One can recognise an SAC domain in the interval leucine 158 to glycine 533. Positions arginine 469–asparagine 480 match the Phosphatase catalytic core motif. Over residues glycine 688–serine 700 the composition is skewed to polar residues. Residues glycine 688 to aspartate 707 form a disordered region.

In terms of assembly, component of the PI(3,5)P2 regulatory complex at least composed of ATG18, SAC/FIG4, FAB1 and VAC14. The cofactor is Mg(2+). As to expression, ubiquitous with a higher level of expression in young seedlings than in other tissues.

It is found in the vacuole membrane. It catalyses the reaction a 1,2-diacyl-sn-glycero-3-phospho-(1D-myo-inositol-3,5-bisphosphate) + H2O = a 1,2-diacyl-sn-glycero-3-phospho-(1D-myo-inositol-3-phosphate) + phosphate. The PI(3,5)P2 regulatory complex regulates both the synthesis and turnover of phosphatidylinositol 3,5-bisphosphate (PtdIns(3,5)P2). The sequence is that of Phosphoinositide phosphatase SAC5 (SAC5) from Arabidopsis thaliana (Mouse-ear cress).